The sequence spans 202 residues: Probable nicotinate-nucleotide adenylyltransferase (202 aa).

This sequence belongs to the NadD family.

The catalysed reaction is nicotinate beta-D-ribonucleotide + ATP + H(+) = deamido-NAD(+) + diphosphate. It functions in the pathway cofactor biosynthesis; NAD(+) biosynthesis; deamido-NAD(+) from nicotinate D-ribonucleotide: step 1/1. Catalyzes the reversible adenylation of nicotinate mononucleotide (NaMN) to nicotinic acid adenine dinucleotide (NaAD). The chain is Probable nicotinate-nucleotide adenylyltransferase from Clostridium perfringens (strain ATCC 13124 / DSM 756 / JCM 1290 / NCIMB 6125 / NCTC 8237 / Type A).